Reading from the N-terminus, the 95-residue chain is Co-chaperonin GroES (95 aa).

It belongs to the GroES chaperonin family. Heptamer of 7 subunits arranged in a ring. Interacts with the chaperonin GroEL.

It localises to the cytoplasm. Its function is as follows. Together with the chaperonin GroEL, plays an essential role in assisting protein folding. The GroEL-GroES system forms a nano-cage that allows encapsulation of the non-native substrate proteins and provides a physical environment optimized to promote and accelerate protein folding. GroES binds to the apical surface of the GroEL ring, thereby capping the opening of the GroEL channel. The chain is Co-chaperonin GroES from Streptococcus thermophilus (strain ATCC BAA-491 / LMD-9).